A 676-amino-acid polypeptide reads, in one-letter code: MEGLSLLQLPRDKFRKSSFFVWVIILFQKAFSMPLGVVTNSTLEVTEIDQLVCKDHLASTDQLKSVGLNLEGSGVSTDIPSATKRWGFRSGVPPQVVSYEAGEWAENCYNLEIKKPDGSECLPPPPDGVRGFPRCRYVHKAQGTGPCPGDYAFHKDGAFFLYDRLASTVIYRGVNFAEGVIAFLILAKPKETFLQSPPIREAANYTENTSSYYATSYLEYEIENFGAQHSTTLFKINNNTFVLLDRPHTPQFLFQLNDTIQLHQQLSNTTGKLIWTLDANINADIGEWAFWENKKNLSEQLRGEELSFETLSLNETEDDDATSSRTTKGRISDRATRKYSDLVPKDSPGMVSLHVPEGETTLPSQNSTEGRRVDVNTQETITETTATIIGTNGNNMQISTIGTGLSSSQILSSSPTMAPSPETQTSTTYTPKLPVMTTEESTTPPRNSPGSTTEAPTLTTPENITTAVKTVWPQESTSNGLITSTVTGILGSLGLRKRSRRQVNTRATGKCNPNLHYWTAQEQHNAAGIAWIPYFGPGAEGIYTEGLMHNQNALVCGLRQLANETTQALQLFLRATTELRTYTILNRKAIDFLLRRWGGTCRILGPDCCIEPHDWTKNITDKINQIIHDFIDNPLPNQDNDDNWWTGWRQWIPAGIGITGIIIAIIALLCVCKLLC.

A signal peptide spans M1–S32. Residues M33–Q650 are Extracellular-facing. Residue N40 is glycosylated (N-linked (GlcNAc...) asparagine; by host). Intrachain disulfides connect C53-C609, C108-C135, C121-C147, C511-C556, and C601-C608. The segment at K54–E201 is receptor-binding. Residues N204, N208, N238, N257, N268, N296, and N314 are each glycosylated (N-linked (GlcNAc...) asparagine; by host). The segment at E305–T485 is mucin-like region. The disordered stretch occupies residues L313 to V351. Over residues R330 to P344 the composition is skewed to basic and acidic residues. N366 is a glycosylation site (N-linked (GlcNAc...) asparagine; by host). Residues S406–L458 are disordered. 2 stretches are compositionally biased toward polar residues: residues P415 to T430 and T438 to L458. Residue N463 is glycosylated (N-linked (GlcNAc...) asparagine; by host). The interval H524–A539 is fusion peptide. Residues L554–R595 are a coiled coil. N-linked (GlcNAc...) asparagine; by host glycosylation is present at N563. The stretch at W615–P634 forms a coiled coil. An N-linked (GlcNAc...) asparagine; by host glycan is attached at N618. A helical membrane pass occupies residues W651–V671. S-palmitoyl cysteine; by host attachment occurs at residues C670 and C672. The Cytoplasmic portion of the chain corresponds to C672 to C676.

The protein belongs to the filoviruses glycoprotein family. In terms of assembly, homotrimer; each monomer consists of a GP1 and a GP2 subunit linked by disulfide bonds. The resulting peplomers (GP1,2) protrude from the virus surface as spikes. Interacts with host integrin alpha-V/ITGAV. Interacts with host CLEC10A. Binds also to host CD209 and CLEC4M/DC-SIGN(R). Interacts with host FOLR1. Interacts with BST2; this interaction inhibits the antiviral effect of BST2 and this allows viral release from infected cells. Interacts with host FCN1; this interaction enhances viral entry. Interacts with host TLR4; this interaction induces cell death in T-lymphocytes or proinflammatory cytokines and SOCS1 production in monocytes. Interacts with host entry receptor NPC1. As to quaternary structure, GP1 and GP2delta are part of GP1,2delta soluble complexes released by ectodomain shedding. The signal peptide region modulates GP's high mannose glycosylation, thereby determining the efficiency of the interactions with DC-SIGN(R). In terms of processing, N-glycosylated. Post-translationally, O-glycosylated in the mucin-like region. Palmitoylation of GP2 is not required for its function. In terms of processing, specific enzymatic cleavages in vivo yield mature proteins. The precursor is processed into GP1 and GP2 by host cell furin in the trans Golgi, and maybe by other host proteases, to yield the mature GP1 and GP2 proteins. The cleavage site corresponds to the furin optimal cleavage sequence [KR]-X-[KR]-R. This cleavage does not seem to be required for function. After the internalization of the virus into cell endosomes, GP1 C-terminus is removed by the endosomal proteases cathepsin B, cathepsin L, or both, leaving a 19-kDa N-terminal fragment which is further digested by cathepsin B. Proteolytic processing of GP1,2 by host ADAM17 can remove the transmembrane anchor of GP2 and leads to shedding of complexes consisting in GP1 and truncated GP2 (GP1,2delta).

It is found in the virion membrane. Its subcellular location is the host cell membrane. The protein resides in the secreted. Trimeric GP1,2 complexes form the virion surface spikes and mediate the viral entry processes, with GP1 acting as the receptor-binding subunit and GP2 as the membrane fusion subunit. At later times of infection, down-regulates the expression of various host cell surface molecules that are essential for immune surveillance and cell adhesion. Down-modulates several integrins including ITGA1, ITGA2, ITGA3, ITGA4, ITGA5, ITGA6, ITGAV and ITGB1. This decrease in cell adhesion molecules may lead to cell detachment, contributing to the disruption of blood vessel integrity and hemorrhages developed during infection (cytotoxicity). Interacts with host TLR4 and thereby stimulates the differentiation and activation of monocytes leading to bystander death of T-lymphocytes. Down-regulates as well the function of host natural killer cells. Counteracts the antiviral effect of host BST2/tetherin that restricts release of progeny virions from infected cells. However, cooperates with VP40 and host BST2 to activate canonical NF-kappa-B pathway in a manner dependent on neddylation. In terms of biological role, functions as a decoy for anti-GP1,2 antibodies thereby contributing to viral immune evasion. Interacts and activates host macrophages and dendritic cells inducing up-regulation of cytokine transcription. This effect is mediated throught activation of host TLR4. Its function is as follows. Responsible for binding to the receptor(s) on target cells. Interacts with CD209/DC-SIGN and CLEC4M/DC-SIGNR which act as cofactors for virus entry into dendritic cells (DCs) and endothelial cells. Binding to the macrophage specific lectin CLEC10A also seem to enhance virus infectivity. Interaction with FOLR1/folate receptor alpha may be a cofactor for virus entry in some cell types, although results are contradictory. Members of the Tyro3 receptor tyrosine kinase family also seem to be cell entry factors in filovirus infection. Once attached, the virions are internalized through clathrin-dependent endocytosis and/or macropinocytosis. After internalization of the virus into the endosomes of the host cell, proteolysis of GP1 by two cysteine proteases, CTSB/cathepsin B and CTSL/cathepsin L removes the glycan cap and allows GP1 binding to the host entry receptor NPC1. NPC1-binding, Ca(2+) and acidic pH induce a conformational change of GP2, which unmasks its fusion peptide and permit membranes fusion. Functionally, acts as a class I viral fusion protein. Under the current model, the protein has at least 3 conformational states: pre-fusion native state, pre-hairpin intermediate state, and post-fusion hairpin state. During viral and target cell membrane fusion, the coiled coil regions (heptad repeats) assume a trimer-of-hairpins structure, positioning the fusion peptide in close proximity to the C-terminal region of the ectodomain. The formation of this structure appears to drive apposition and subsequent fusion of viral and target cell membranes. Responsible for penetration of the virus into the cell cytoplasm by mediating the fusion of the membrane of the endocytosed virus particle with the endosomal membrane. Low pH in endosomes induces an irreversible conformational change in GP2, releasing the fusion hydrophobic peptide. In Epomops franqueti (Franquet's epauletted fruit bat), this protein is Envelope glycoprotein (GP).